We begin with the raw amino-acid sequence, 319 residues long: 7,8-didemethyl-8-hydroxy-5-deazariboflavin synthase (319 aa).

Residues 5–236 (VTYSPAYTIV…SNITLQIPPN (232 aa)) form the Radical SAM core domain. [4Fe-4S] cluster is bound by residues Cys19, Cys23, and Cys26.

It belongs to the radical SAM superfamily. CofG family. Consists of two subunits, CofG and CofH. [4Fe-4S] cluster serves as cofactor.

The catalysed reaction is 5-amino-5-(4-hydroxybenzyl)-6-(D-ribitylimino)-5,6-dihydrouracil + S-adenosyl-L-methionine = 7,8-didemethyl-8-hydroxy-5-deazariboflavin + 5'-deoxyadenosine + L-methionine + NH4(+) + H(+). Its pathway is cofactor biosynthesis; coenzyme F0 biosynthesis. In terms of biological role, catalyzes the radical-mediated synthesis of 7,8-didemethyl-8-hydroxy-5-deazariboflavin from 5-amino-5-(4-hydroxybenzyl)-6-(D-ribitylimino)-5,6-dihydrouracil. The polypeptide is 7,8-didemethyl-8-hydroxy-5-deazariboflavin synthase (Trichodesmium erythraeum (strain IMS101)).